A 466-amino-acid polypeptide reads, in one-letter code: MSNNTDLSPVHVIGGGLAGSEAAWQIAQAGVPVVLHEMRPVRGTDAHKTEQLAELVCSNSFRSDDAETNAVGVLHAEMRLAGSLIMACADAHQVPAGGALAVDREGFSQAVTARLEAHPLITIEREEITGLPPTEWGTTIIATGPLTAPSLAEAIAAETDADALAFFDAIAPIIHFDSINMDVCWFQSRYDKVGPGGTGKDYINCPMDKEQYEAFVAALIEGDKTDFKEWEGTPYFDGCLPIEVMAERGPETLRHGPMKPMGLTNAHNPTVKPYAVVQLRQDNALGTLYNMVGFQTKLKYGSQTGIFKMIPGLENAEFARLGGLHRNTYLNSPVLLDNVLRLKSRQTLRFAGQVTGCEGYVESSAIGLLAGRFTAAEKLSQAAVPPPPTTAFGALLGHITGGHIVTNDEPGKRSFQPMNVNFGLFPPVDVPKPEGKRLRGKEKTIAKKRALSARALADCRNWLSLY.

Residue 14-19 participates in FAD binding; it reads GGGLAG.

This sequence belongs to the MnmG family. TrmFO subfamily. It depends on FAD as a cofactor.

It localises to the cytoplasm. It carries out the reaction uridine(54) in tRNA + (6R)-5,10-methylene-5,6,7,8-tetrahydrofolate + NADH + H(+) = 5-methyluridine(54) in tRNA + (6S)-5,6,7,8-tetrahydrofolate + NAD(+). The enzyme catalyses uridine(54) in tRNA + (6R)-5,10-methylene-5,6,7,8-tetrahydrofolate + NADPH + H(+) = 5-methyluridine(54) in tRNA + (6S)-5,6,7,8-tetrahydrofolate + NADP(+). Catalyzes the folate-dependent formation of 5-methyl-uridine at position 54 (M-5-U54) in all tRNAs. This is Methylenetetrahydrofolate--tRNA-(uracil-5-)-methyltransferase TrmFO from Brucella abortus (strain 2308).